The following is a 94-amino-acid chain: Small ribosomal subunit protein uS19 (94 aa).

It belongs to the universal ribosomal protein uS19 family.

Its function is as follows. Protein S19 forms a complex with S13 that binds strongly to the 16S ribosomal RNA. This chain is Small ribosomal subunit protein uS19, found in Buchnera aphidicola subsp. Cinara cedri (strain Cc).